Reading from the N-terminus, the 249-residue chain is DNA polymerase sliding clamp (249 aa).

The protein belongs to the PCNA family. In terms of assembly, homotrimer. The subunits circularize to form a toroid; DNA passes through its center. Replication factor C (RFC) is required to load the toroid on the DNA.

In terms of biological role, sliding clamp subunit that acts as a moving platform for DNA processing. Responsible for tethering the catalytic subunit of DNA polymerase and other proteins to DNA during high-speed replication. The polypeptide is DNA polymerase sliding clamp (Thermococcus onnurineus (strain NA1)).